The primary structure comprises 49 residues: Large ribosomal subunit protein bL32 (49 aa).

The tract at residues 25–49 (AKPVKDKDGTYKLPHHINPTTGEYK) is disordered.

It belongs to the bacterial ribosomal protein bL32 family.

This is Large ribosomal subunit protein bL32 from Sulfurimonas denitrificans (strain ATCC 33889 / DSM 1251) (Thiomicrospira denitrificans (strain ATCC 33889 / DSM 1251)).